Here is a 427-residue protein sequence, read N- to C-terminus: Endothelin-1 receptor (427 aa).

Positions 1–20 (METLCLRASFWLALVGCVIS) are cleaved as a signal peptide. The Extracellular segment spans residues 21-80 (DNPERYSTNLSNHVDDFTTFRGTELSFLVTTHQPTNLVLPSNGSMHNYCPQQTKITSAFK). Asn29 and Asn62 each carry an N-linked (GlcNAc...) asparagine glycan. Residues 81-102 (YINTVISCTIFIVGMVGNATLL) traverse the membrane as a helical segment. The Cytoplasmic segment spans residues 103 to 112 (RIIYQNKCMR). Residues 113-132 (NGPNALIASLALGDLIYVVI) traverse the membrane as a helical segment. The Extracellular segment spans residues 133–159 (DLPINVFKLLAGRWPFDHNDFGVFLCK). Cysteines 158 and 239 form a disulfide. Residues 160–181 (LFPFLQKSSVGITVLNLCALSV) form a helical membrane-spanning segment. At 182-205 (DRYRAVASWSRVQGIGIPLVTAIE) the chain is on the cytoplasmic side. Residues 206 to 229 (IVSIWILSFILAIPEAIGFVMVPF) form a helical membrane-spanning segment. The Extracellular portion of the chain corresponds to 230-256 (EYRGEQHKTCMLNATSKFMEFYQDVKD). The chain crosses the membrane as a helical span at residues 257 to 278 (WWLFGFYFCMPLVCTAIFYTLM). Residues 279 to 306 (TCEMLNRRNGSLRIALSEHLKQRREVAK) lie on the Cytoplasmic side of the membrane. A helical membrane pass occupies residues 307-328 (TVFCLVVIFALCWFPLHLSRIL). Residues 329–347 (KKTVYNEMDKNRCELLSFL) lie on the Extracellular side of the membrane. A helical membrane pass occupies residues 348–372 (LLMDYIGINLATMNSCINPIALYFV). The Cytoplasmic segment spans residues 373-427 (SKKFKNCFQSCLCCCCYQSKSLMTSVPMNGTSIQWKNHDQNNHNTDRSSHKDSMN). Positions 406 to 427 (QWKNHDQNNHNTDRSSHKDSMN) are disordered. The span at 408–427 (KNHDQNNHNTDRSSHKDSMN) shows a compositional bias: basic and acidic residues. Ser425 is subject to Phosphoserine.

This sequence belongs to the G-protein coupled receptor 1 family. Endothelin receptor subfamily. EDNRA sub-subfamily. Interacts with HDAC7 and KAT5. In terms of tissue distribution, isoform 1, isoform 3 and isoform 4 are expressed in a variety of tissues, with highest levels in the aorta and cerebellum, followed by lung, atrium and cerebral cortex, lower levels in the placenta, kidney, adrenal gland, duodenum, colon, ventricle and liver but no expression in umbilical vein endothelial cells. Within the placenta, isoform 1, isoform 2, isoform 3 and isoform 4 are expressed in the villi and stem villi vessels.

It localises to the cell membrane. Its function is as follows. Receptor for endothelin-1. Mediates its action by association with G proteins that activate a phosphatidylinositol-calcium second messenger system. The rank order of binding affinities for ET-A is: ET1 &gt; ET2 &gt;&gt; ET3. This chain is Endothelin-1 receptor, found in Homo sapiens (Human).